The primary structure comprises 442 residues: Proline--tRNA ligase (442 aa).

It belongs to the class-II aminoacyl-tRNA synthetase family. ProS type 2 subfamily. In terms of assembly, homodimer.

Its subcellular location is the cytoplasm. It carries out the reaction tRNA(Pro) + L-proline + ATP = L-prolyl-tRNA(Pro) + AMP + diphosphate. In terms of biological role, catalyzes the attachment of proline to tRNA(Pro) in a two-step reaction: proline is first activated by ATP to form Pro-AMP and then transferred to the acceptor end of tRNA(Pro). The polypeptide is Proline--tRNA ligase (Rhizobium meliloti (strain 1021) (Ensifer meliloti)).